Reading from the N-terminus, the 251-residue chain is ATP synthase subunit a (251 aa).

The next 5 helical transmembrane spans lie at 28–48, 84–104, 130–150, 192–212, and 220–240; these read TDTV…AFFL, IAPF…ISNW, INYV…AGIW, IFAG…IMWA, and FDLF…ILYF.

It belongs to the ATPase A chain family. In terms of assembly, F-type ATPases have 2 components, CF(1) - the catalytic core - and CF(0) - the membrane proton channel. CF(1) has five subunits: alpha(3), beta(3), gamma(1), delta(1), epsilon(1). CF(0) has three main subunits: a(1), b(2) and c(9-12). The alpha and beta chains form an alternating ring which encloses part of the gamma chain. CF(1) is attached to CF(0) by a central stalk formed by the gamma and epsilon chains, while a peripheral stalk is formed by the delta and b chains.

The protein localises to the cell membrane. Key component of the proton channel; it plays a direct role in the translocation of protons across the membrane. The sequence is that of ATP synthase subunit a from Mycobacterium leprae (strain TN).